The following is a 465-amino-acid chain: Hydroxyacid-oxoacid transhydrogenase, mitochondrial (465 aa).

This sequence belongs to the iron-containing alcohol dehydrogenase family. Hydroxyacid-oxoacid transhydrogenase subfamily.

It localises to the mitochondrion. The enzyme catalyses (S)-3-hydroxybutanoate + 2-oxoglutarate = (R)-2-hydroxyglutarate + acetoacetate. It catalyses the reaction 4-hydroxybutanoate + 2-oxoglutarate = (R)-2-hydroxyglutarate + succinate semialdehyde. Catalyzes the cofactor-independent reversible oxidation of gamma-hydroxybutyrate (GHB) to succinic semialdehyde (SSA) coupled to reduction of 2-ketoglutarate (2-KG) to D-2-hydroxyglutarate (D-2-HG). L-3-hydroxybutyrate (L-3-OHB) is also a substrate for HOT when using 2-KG as hydrogen acceptor, resulting in the formation of D-2-HG. The polypeptide is Hydroxyacid-oxoacid transhydrogenase, mitochondrial (Caenorhabditis elegans).